The following is a 61-amino-acid chain: Large ribosomal subunit protein bL32 (61 aa).

A compositionally biased stretch (basic residues) spans 1–16 (MAVPKRKTSPSKRGMR). The interval 1–61 (MAVPKRKTSP…RSVLTPKNSG (61 aa)) is disordered. The segment covering 28–44 (VEDKDSGELRRPHHIDL) has biased composition (basic and acidic residues).

Belongs to the bacterial ribosomal protein bL32 family.

In Bartonella bacilliformis (strain ATCC 35685 / KC583 / Herrer 020/F12,63), this protein is Large ribosomal subunit protein bL32.